Consider the following 337-residue polypeptide: UDP-glucose 4-epimerase (337 aa).

NAD(+) is bound by residues 11 to 12 (YI), 31 to 36 (DNLSNA), 58 to 59 (DL), 80 to 84 (FAGLK), N99, S124, Y149, K153, and F178. Substrate-binding residues include S124 and Y149. Y149 serves as the catalytic Proton acceptor. Residues N179, 199-200 (NL), 216-218 (GIF), R231, and 292-295 (RDGD) contribute to the substrate site.

This sequence belongs to the NAD(P)-dependent epimerase/dehydratase family. In terms of assembly, homodimer. The cofactor is NAD(+).

It carries out the reaction UDP-alpha-D-glucose = UDP-alpha-D-galactose. The protein operates within carbohydrate metabolism; galactose metabolism. Involved in the metabolism of galactose. Catalyzes the conversion of UDP-galactose (UDP-Gal) to UDP-glucose (UDP-Glc) through a mechanism involving the transient reduction of NAD. This chain is UDP-glucose 4-epimerase (galE), found in Erwinia amylovora (Fire blight bacteria).